The following is a 216-amino-acid chain: MRTRYKNTYKEFLGACFLGSVTLLSISLWNIINQAGKNHSYKAFIEFDSAYGIQEGTAVRLRGLPVGKVVGISQSSNSILTSIEIKSSSTIIPKTSLIETNQTGLLNDTVIDIIPLSKLSIDYSSIKAGPLSGACDNSQIICNLNYLKGERGLNYDDLIRATTRISQRFDDPKLFYGLYYLIGNMIKLSNNFVDLTEQIAYMSLFIRLQLENLKEQ.

It is found in the plastid. The protein resides in the chloroplast. This is an uncharacterized protein from Pyropia yezoensis (Susabi-nori).